The primary structure comprises 248 residues: 3-deoxy-manno-octulosonate cytidylyltransferase (248 aa).

It belongs to the KdsB family.

It localises to the cytoplasm. The enzyme catalyses 3-deoxy-alpha-D-manno-oct-2-ulosonate + CTP = CMP-3-deoxy-beta-D-manno-octulosonate + diphosphate. Its pathway is nucleotide-sugar biosynthesis; CMP-3-deoxy-D-manno-octulosonate biosynthesis; CMP-3-deoxy-D-manno-octulosonate from 3-deoxy-D-manno-octulosonate and CTP: step 1/1. It participates in bacterial outer membrane biogenesis; lipopolysaccharide biosynthesis. Functionally, activates KDO (a required 8-carbon sugar) for incorporation into bacterial lipopolysaccharide in Gram-negative bacteria. The protein is 3-deoxy-manno-octulosonate cytidylyltransferase of Escherichia fergusonii (strain ATCC 35469 / DSM 13698 / CCUG 18766 / IAM 14443 / JCM 21226 / LMG 7866 / NBRC 102419 / NCTC 12128 / CDC 0568-73).